The following is a 254-amino-acid chain: Glutamate racemase (254 aa).

Residues 10-11 (DS) and 42-43 (YG) each bind substrate. Cys73 serves as the catalytic Proton donor/acceptor. 74-75 (NT) is a binding site for substrate. The active-site Proton donor/acceptor is Cys183. 184-185 (TH) serves as a coordination point for substrate.

Belongs to the aspartate/glutamate racemases family.

It carries out the reaction L-glutamate = D-glutamate. The protein operates within cell wall biogenesis; peptidoglycan biosynthesis. Provides the (R)-glutamate required for cell wall biosynthesis. In Herpetosiphon aurantiacus (strain ATCC 23779 / DSM 785 / 114-95), this protein is Glutamate racemase.